A 216-amino-acid polypeptide reads, in one-letter code: Large ribosomal subunit protein uL3 (216 aa).

Disordered regions lie at residues 89–108 and 139–158; these read QRASDEEMPETGGSIDVGGF and NTHGNSKSHRVPGSIGQCQS. The residue at position 157 (Gln-157) is an N5-methylglutamine.

Belongs to the universal ribosomal protein uL3 family. Part of the 50S ribosomal subunit. Forms a cluster with proteins L14 and L19. Post-translationally, methylated by PrmB.

One of the primary rRNA binding proteins, it binds directly near the 3'-end of the 23S rRNA, where it nucleates assembly of the 50S subunit. This is Large ribosomal subunit protein uL3 from Halorhodospira halophila (strain DSM 244 / SL1) (Ectothiorhodospira halophila (strain DSM 244 / SL1)).